The following is a 507-amino-acid chain: GMP synthase [glutamine-hydrolyzing] (507 aa).

A Glutamine amidotransferase type-1 domain is found at 9–202; that stretch reads TILIIDFGSQ…VHRIVGVKPG (194 aa). The active-site Nucleophile is C86. Active-site residues include H176 and E178. Residues 203–395 enclose the GMPS ATP-PPase domain; that stretch reads WTMGAYREQA…LGLPDSFIGR (193 aa). Position 230-236 (230-236) interacts with ATP; it reads SGGVDSS.

In terms of assembly, homodimer.

It carries out the reaction XMP + L-glutamine + ATP + H2O = GMP + L-glutamate + AMP + diphosphate + 2 H(+). The protein operates within purine metabolism; GMP biosynthesis; GMP from XMP (L-Gln route): step 1/1. In terms of biological role, catalyzes the synthesis of GMP from XMP. This is GMP synthase [glutamine-hydrolyzing] from Brucella melitensis biotype 1 (strain ATCC 23456 / CCUG 17765 / NCTC 10094 / 16M).